Reading from the N-terminus, the 137-residue chain is Putative pre-16S rRNA nuclease (137 aa).

This sequence belongs to the YqgF nuclease family.

It is found in the cytoplasm. In terms of biological role, could be a nuclease involved in processing of the 5'-end of pre-16S rRNA. This Chromobacterium violaceum (strain ATCC 12472 / DSM 30191 / JCM 1249 / CCUG 213 / NBRC 12614 / NCIMB 9131 / NCTC 9757 / MK) protein is Putative pre-16S rRNA nuclease.